The following is a 447-amino-acid chain: Cytochrome P450 BJ-4 homolog (447 aa).

C392 is a binding site for heme.

Belongs to the cytochrome P450 family. Heme serves as cofactor.

Its function is as follows. Cytochromes P450 are a group of heme-thiolate monooxygenases. They oxidize a variety of structurally unrelated compounds, including steroids, fatty acids, and xenobiotics. The chain is Cytochrome P450 BJ-4 homolog (cyp117A2) from Sinorhizobium fredii (strain NBRC 101917 / NGR234).